The chain runs to 306 residues: Putative B3 domain-containing protein Os03g0621600 (306 aa).

The TF-B3 1 DNA-binding region spans 29–122; sequence FSVLCLMPIM…QLKTLIFDSS (94 aa). Positions 139–166 are disordered; that stretch reads YDIAMRNSQDEKKKRKQRDISRQGTVKP. Positions 210–306 form a DNA-binding region, TF-B3 2; the sequence is GYVMNNSSIH…VMDVHIIRRK (97 aa).

The protein localises to the nucleus. This chain is Putative B3 domain-containing protein Os03g0621600, found in Oryza sativa subsp. japonica (Rice).